The primary structure comprises 227 residues: 7-cyano-7-deazaguanine synthase (227 aa).

Position 8–18 (8–18 (FSGGQDSTTCL)) interacts with ATP. Zn(2+)-binding residues include Cys187, Cys196, Cys199, and Cys202.

This sequence belongs to the QueC family. The cofactor is Zn(2+).

It carries out the reaction 7-carboxy-7-deazaguanine + NH4(+) + ATP = 7-cyano-7-deazaguanine + ADP + phosphate + H2O + H(+). The protein operates within purine metabolism; 7-cyano-7-deazaguanine biosynthesis. Its function is as follows. Catalyzes the ATP-dependent conversion of 7-carboxy-7-deazaguanine (CDG) to 7-cyano-7-deazaguanine (preQ(0)). This Aliivibrio salmonicida (strain LFI1238) (Vibrio salmonicida (strain LFI1238)) protein is 7-cyano-7-deazaguanine synthase.